The following is a 185-amino-acid chain: Ribosome-recycling factor (185 aa).

The protein belongs to the RRF family.

It is found in the cytoplasm. Responsible for the release of ribosomes from messenger RNA at the termination of protein biosynthesis. May increase the efficiency of translation by recycling ribosomes from one round of translation to another. The polypeptide is Ribosome-recycling factor (Glaesserella parasuis serovar 5 (strain SH0165) (Haemophilus parasuis)).